The following is a 96-amino-acid chain: Large ribosomal subunit protein bL27 (96 aa).

Residues 1–9 constitute a propeptide that is removed on maturation; it reads MLNMNLQLL.

This sequence belongs to the bacterial ribosomal protein bL27 family. The N-terminus is cleaved by ribosomal processing cysteine protease Prp.

This is Large ribosomal subunit protein bL27 from Clostridioides difficile (strain 630) (Peptoclostridium difficile).